Consider the following 145-residue polypeptide: Putative pre-16S rRNA nuclease (145 aa).

The protein belongs to the YqgF nuclease family.

The protein resides in the cytoplasm. Could be a nuclease involved in processing of the 5'-end of pre-16S rRNA. The chain is Putative pre-16S rRNA nuclease from Pseudomonas fluorescens (strain Pf0-1).